Reading from the N-terminus, the 234-residue chain is Cyclo(L-leucyl-L-leucyl) synthase (234 aa).

Ser-33 functions as the Nucleophile in the catalytic mechanism. Substrate is bound by residues Asn-36, 179-183 (YIFAE), Tyr-203, and 208-209 (SI).

It belongs to the CDPS family.

The catalysed reaction is 2 L-leucyl-tRNA(Leu) = cyclo(L-leucyl-L-leucyl) + 2 tRNA(Leu) + 2 H(+). Its function is as follows. It uses activated amino acids in the form of aminoacyl-tRNAs (aa-tRNAs) as substrates to catalyze the ATP-independent formation of cyclodipeptides which are intermediates in diketopiperazine (DKP) biosynthetic pathways. Catalyzes the formation of cyclo(L-Leu-L-Leu) (cLL) from L-leucyl-tRNA(Leu). Can incorporate various nonpolar residues, such as L-phenylalanine, L-leucine and L-methionine, into cyclodipeptides. The polypeptide is Cyclo(L-leucyl-L-leucyl) synthase (Photorhabdus laumondii subsp. laumondii (strain DSM 15139 / CIP 105565 / TT01) (Photorhabdus luminescens subsp. laumondii)).